Consider the following 230-residue polypeptide: Large ribosomal subunit protein uL1 (230 aa).

Belongs to the universal ribosomal protein uL1 family. In terms of assembly, part of the 50S ribosomal subunit.

Functionally, binds directly to 23S rRNA. The L1 stalk is quite mobile in the ribosome, and is involved in E site tRNA release. In terms of biological role, protein L1 is also a translational repressor protein, it controls the translation of the L11 operon by binding to its mRNA. The chain is Large ribosomal subunit protein uL1 from Nitrosomonas europaea (strain ATCC 19718 / CIP 103999 / KCTC 2705 / NBRC 14298).